The following is a 623-amino-acid chain: Protein skinhead-1 (623 aa).

Disordered regions lie at residues 1 to 29, 158 to 184, 421 to 451, and 467 to 557; these read MGGSSRRQRSTSATRRDDKRRRRQCFSSV, TEHPPASPFGRGPSTERPTTSSRYEYS, YQSTGQTPLSPLIIGSSGRQQQTQTSPGSVT, and QRHS…LASD. S164 carries the post-translational modification Phosphoserine; by pmk-1. Residues 173–184 are compositionally biased toward polar residues; the sequence is ERPTTSSRYEYS. The residue at position 430 (S430) is a Phosphoserine; by pmk-1. Composition is skewed to low complexity over residues 435 to 449, 472 to 498, and 511 to 529; these read GSSGRQQQTQTSPGS, SDCTTDSSSTCSRLSSESPRYTSESST, and PSSGSRYQRSSSPRSSQSS. A basic motif region spans residues 540-623; sequence SGQRKRGRQS…DRHDKMSHYI (84 aa).

The protein belongs to the bZIP family. Skn1 subfamily. In terms of assembly, monomer. Interacts with GATA factor elt-3; interaction may enhance transcriptional activation of target genes. Interacts with pgma-5. Interacts with transcription factor mxl-3 (via N-terminus). In terms of processing, cleaved by the aspartic protease ddi-1. In terms of tissue distribution, postembryonic intestinal cells.

It is found in the nucleus. Its subcellular location is the cytoplasm. The protein resides in the mitochondrion. Functionally, transcription factor. Required to specify the fate of ventral blastomeres in the early embryo, and postembryonically for the development of the intestine. Directly regulates expression of zygotically expressed med-1 and med-2 to direct mesendoderm development. In response to oxidative stress and anoxia, required to up-regulate expression of stl-1 mRNA. Involved in regulating innate immunity, acting downstream of the pmk-1 p38/MAPK pathway and probably also downstream of nipi-3. Required for the up-regulation of phase II detoxification genes, including gcs-1 and several glutathione-S-transferase mRNAs in response to oxidative stress generated during pathogenic bacterial infection. Modulates oxidative stress responses in concert with transcription factors such as hcf-1 and elt-3. Regulates the transcription of genes associated with metabolism in response to changes in nutrient availability. In neurons, involved in mitochondrial fusion and behavioral recovery during reoxygenation. Required for riok-1 mRNA expression in the intestine. Downstream of the let-60/Ras, mek-2 and pmk-1 pathway, positively regulates lifespan probably by preventing transcription of insulin-like peptides such as ins-39. Prevents degeneration of dopaminergic CEP neurons in response to high Al(3+) or Mn(2+) levels, probably by promoting the expression of glutathione-S-transferase gst-1. In terms of biological role, directed by the ER-associated degradation pathway (ERAD), mediates proteasomal homeostasis by regulating the expression of proteasomal subunits such as rpt-3 to confer resistance to proteasomal dysfunction. The sequence is that of Protein skinhead-1 (skn-1) from Caenorhabditis elegans.